We begin with the raw amino-acid sequence, 718 residues long: Catalase-peroxidase (718 aa).

The disordered stretch occupies residues 1-24 (MDQKSDNAGKCPVAHTVPKGRSNR). Residues 95 to 217 (WHSAGTYRIT…LAAVQMGLIY (123 aa)) constitute a cross-link (tryptophyl-tyrosyl-methioninium (Trp-Tyr) (with M-243)). The active-site Proton acceptor is the H96. Positions 217-243 (YVNPEGPNGNPDPVAAAREIRETFARM) form a cross-link, tryptophyl-tyrosyl-methioninium (Tyr-Met) (with W-95). H258 contributes to the heme b binding site.

The protein belongs to the peroxidase family. Peroxidase/catalase subfamily. As to quaternary structure, homodimer or homotetramer. The cofactor is heme b. In terms of processing, formation of the three residue Trp-Tyr-Met cross-link is important for the catalase, but not the peroxidase activity of the enzyme.

The catalysed reaction is H2O2 + AH2 = A + 2 H2O. It carries out the reaction 2 H2O2 = O2 + 2 H2O. Functionally, bifunctional enzyme with both catalase and broad-spectrum peroxidase activity. The sequence is that of Catalase-peroxidase from Sinorhizobium fredii (strain NBRC 101917 / NGR234).